A 476-amino-acid chain; its full sequence is PRAME family member 6 (476 aa).

Residues 97-124 form an LRR 1; degenerate repeat; it reads RWKLQVLDLQDVCENFWMVWSEAMARGC. An LRR 2; degenerate repeat occupies 179 to 203; sequence HLCCKKLKILGMPFRNIRSILKMVN. One copy of the LRR 3; degenerate repeat lies at 204–230; sequence LDCIQEVEVNCKWVLPILTQFTPYLGH. The LRR 4; degenerate repeat unit spans residues 231-266; sequence MRNLQKLVLSHMDVSRYVSPEQKKEIVTQFTTQFLK. 5 LRR repeats span residues 267–292, 293–324, 325–345, 349–376, and 377–401; these read LCCL…LSCL, KTSL…SQLK, TLDL…QILL, AATL…ALSR, and CFEL…LLSH.

The protein belongs to the PRAME family. Component of a CRL2 E3 ubiquitin-protein ligase complex, also named ECS (Elongin BC-CUL2/5-SOCS-box protein) complex, composed of CUL2, Elongin BC (ELOB and ELOC), RBX1 and substrate-specific adapter PRAMEF6.

It participates in protein modification; protein ubiquitination. Substrate-recognition component of a Cul2-RING (CRL2) E3 ubiquitin-protein ligase complex, which mediates ubiquitination of target proteins, leading to their degradation. The CRL2(PRAMEF6) complex mediates ubiquitination and degradation of truncated MSRB1/SEPX1 selenoproteins produced by failed UGA/Sec decoding. The polypeptide is PRAME family member 6 (Homo sapiens (Human)).